We begin with the raw amino-acid sequence, 3095 residues long: HD protein homolog (3095 aa).

Disordered regions lie at residues 105 to 197 (PHQH…NGNA), 536 to 561 (QQQQ…TMSG), 1312 to 1371 (PPQQ…STVI), 1509 to 1547 (KSTS…TTPS), and 2005 to 2037 (KELT…KEEE). Positions 115 to 139 (STNLTDHLSQNSVTPSVPTTPNYQQ) are enriched in polar residues. 2 stretches are compositionally biased toward low complexity: residues 140–197 (SPST…NGNA) and 536–551 (QQQQ…QQQQ). Residues 552 to 561 (HNLTSSTMSG) show a composition bias toward polar residues. Low complexity-rich tracts occupy residues 1315 to 1368 (QQQQ…LNNS), 1510 to 1547 (STSS…TTPS), and 2008 to 2018 (TNNNNNNNNNI).

This sequence belongs to the huntingtin family.

Its subcellular location is the cytoplasm. It localises to the nucleus. Its function is as follows. May play a role in microtubule-mediated transport or vesicle function. The chain is HD protein homolog (htt) from Dictyostelium discoideum (Social amoeba).